Reading from the N-terminus, the 107-residue chain is U1-lycotoxin-Ls1b (107 aa).

Residues 1–20 form the signal peptide; the sequence is MMKVLVVIALLVTLISYSSS. Positions 21-41 are excised as a propeptide; it reads EGIDDLEADELLSLMANEQTR. 4 cysteine pairs are disulfide-bonded: Cys-44/Cys-59, Cys-51/Cys-68, Cys-58/Cys-86, and Cys-70/Cys-84.

Belongs to the neurotoxin 19 (CSTX) family. 04 (U1-Lctx) subfamily. Expressed by the venom gland.

It localises to the secreted. The sequence is that of U1-lycotoxin-Ls1b from Lycosa singoriensis (Wolf spider).